Here is a 300-residue protein sequence, read N- to C-terminus: Ribosomal protein bS6--L-glutamate ligase (300 aa).

The region spanning 104-287 is the ATP-grasp domain; that stretch reads MQLLARQGID…IAGKMIRWIE (184 aa). ATP contacts are provided by residues K141, 178–179, D187, and 211–213; these read EY and RSN. Mg(2+) contacts are provided by D248, E260, and N262. D248, E260, and N262 together coordinate Mn(2+).

The protein belongs to the RimK family. Requires Mg(2+) as cofactor. The cofactor is Mn(2+).

An L-glutamate ligase that catalyzes the ATP-dependent post-translational addition of glutamate residues to the C-terminus of ribosomal protein bS6 (RpsF). Is also able to catalyze the synthesis of poly-alpha-glutamate in vitro, via ATP hydrolysis from unprotected glutamate as substrate. The number of glutamate residues added to either RpsF or to poly-alpha-glutamate changes with pH. The chain is Ribosomal protein bS6--L-glutamate ligase from Escherichia coli O7:K1 (strain IAI39 / ExPEC).